A 304-amino-acid chain; its full sequence is MKTEHAKPLMTPEPNSPPPEDQYTAVSPWREAFKQLKKNKLAIVGLIIITSFILIAIFAPLLTSSSYAETNPSNRLQGPSAEHWFGTDDFGRDIFTRIVYGARLSLQVGFFAVTGALIFGTTLGLIAGYYGRWIDMLISRIFDIMLAFPSILLAIAIVAILGPSLQNALIAIAIVNVPIFGRLVRSKVISLREEEFIMAAKAQGMKNGRIIFHHILPNSLAPIIVQATLGFGTAILEAAALGFLGLGAQAPMPEWGKMLSDSRQFIQSAPWTVLFPGFSIMLVVLGFNMIGDGLRDALDPKMKS.

Residues 1-24 (MKTEHAKPLMTPEPNSPPPEDQYT) are disordered. A run of 6 helical transmembrane segments spans residues 41–61 (LAIV…FAPL), 108–128 (VGFF…LIAG), 141–161 (IFDI…VAIL), 164–184 (SLQN…GRLV), 227–247 (ATLG…LGLG), and 271–291 (WTVL…NMIG). One can recognise an ABC transmembrane type-1 domain in the interval 102 to 291 (ARLSLQVGFF…LVVLGFNMIG (190 aa)).

The protein belongs to the binding-protein-dependent transport system permease family. OppBC subfamily.

It is found in the cell membrane. In terms of biological role, probably part of the ABC transporter Dpp involved in dipeptide transport. Responsible for the translocation of the substrate across the membrane. The polypeptide is Dipeptide transport system permease protein DppC (dppC) (Alkalihalophilus pseudofirmus (strain ATCC BAA-2126 / JCM 17055 / OF4) (Bacillus pseudofirmus)).